The sequence spans 305 residues: Glycine--tRNA ligase alpha subunit (305 aa).

It belongs to the class-II aminoacyl-tRNA synthetase family. Tetramer of two alpha and two beta subunits.

The protein localises to the cytoplasm. The enzyme catalyses tRNA(Gly) + glycine + ATP = glycyl-tRNA(Gly) + AMP + diphosphate. This Vibrio parahaemolyticus serotype O3:K6 (strain RIMD 2210633) protein is Glycine--tRNA ligase alpha subunit.